A 220-amino-acid polypeptide reads, in one-letter code: Iron-sulfur cluster repair protein YtfE (220 aa).

This sequence belongs to the RIC family. YtfE subfamily. In terms of assembly, homodimer.

Its subcellular location is the cytoplasm. Di-iron-containing protein involved in the repair of iron-sulfur clusters damaged by oxidative and nitrosative stress conditions. This Shigella boydii serotype 18 (strain CDC 3083-94 / BS512) protein is Iron-sulfur cluster repair protein YtfE.